Reading from the N-terminus, the 183-residue chain is Large ribosomal subunit protein eL18 (183 aa).

Residues 150–183 (RHFGPAPGAPRSHTKPYVRTKGHERARPRRRSNV) are disordered. A compositionally biased stretch (basic residues) spans 161–183 (SHTKPYVRTKGHERARPRRRSNV).

The protein belongs to the eukaryotic ribosomal protein eL18 family.

The protein resides in the cytoplasm. In Spodoptera frugiperda (Fall armyworm), this protein is Large ribosomal subunit protein eL18 (RpL18).